Consider the following 136-residue polypeptide: Small ribosomal subunit protein uS8c (136 aa).

The protein belongs to the universal ribosomal protein uS8 family. Part of the 30S ribosomal subunit.

It is found in the plastid. The protein localises to the chloroplast. Its function is as follows. One of the primary rRNA binding proteins, it binds directly to 16S rRNA central domain where it helps coordinate assembly of the platform of the 30S subunit. This Saccharum hybrid (Sugarcane) protein is Small ribosomal subunit protein uS8c (rps8).